The chain runs to 447 residues: UDP-N-acetylmuramate--L-alanine ligase (447 aa).

115-121 serves as a coordination point for ATP; it reads GAHGKTS.

The protein belongs to the MurCDEF family.

It is found in the cytoplasm. The enzyme catalyses UDP-N-acetyl-alpha-D-muramate + L-alanine + ATP = UDP-N-acetyl-alpha-D-muramoyl-L-alanine + ADP + phosphate + H(+). It participates in cell wall biogenesis; peptidoglycan biosynthesis. In terms of biological role, cell wall formation. This chain is UDP-N-acetylmuramate--L-alanine ligase, found in Streptococcus thermophilus (strain CNRZ 1066).